The sequence spans 156 residues: Transcription antitermination protein NusB (156 aa).

It belongs to the NusB family.

Functionally, involved in transcription antitermination. Required for transcription of ribosomal RNA (rRNA) genes. Binds specifically to the boxA antiterminator sequence of the ribosomal RNA (rrn) operons. This Rickettsia bellii (strain OSU 85-389) protein is Transcription antitermination protein NusB.